The following is a 242-amino-acid chain: NAD-dependent protein deacetylase (242 aa).

Residues Met1–Lys242 form the Deacetylase sirtuin-type domain. Residues Ala23, Thr27, Phe34, Arg35, Gln102, Ile104, Asp105, and His120 each coordinate NAD(+). Phe34 contacts nicotinamide. Nicotinamide-binding residues include Ile104 and Asp105. Catalysis depends on His120, which acts as the Proton acceptor. The Zn(2+) site is built by Cys128, Cys131, Cys148, and Cys151. NAD(+) is bound by residues Thr187, Ser188, Asn213, and Ile231.

It belongs to the sirtuin family. Class U subfamily. Zn(2+) is required as a cofactor.

The protein resides in the cytoplasm. The enzyme catalyses N(6)-acetyl-L-lysyl-[protein] + NAD(+) + H2O = 2''-O-acetyl-ADP-D-ribose + nicotinamide + L-lysyl-[protein]. Its function is as follows. NAD-dependent protein deacetylase which modulates the activities of several enzymes which are inactive in their acetylated form. This Bacillus cereus (strain ATCC 10987 / NRS 248) protein is NAD-dependent protein deacetylase.